A 220-amino-acid polypeptide reads, in one-letter code: Protein Syd (220 aa).

It belongs to the Syd family.

The protein resides in the cell inner membrane. Interacts with the SecY protein in vivo. May bind preferentially to an uncomplexed state of SecY, thus functioning either as a chelating agent for excess SecY in the cell or as a regulatory factor that negatively controls the translocase function. The polypeptide is Protein Syd (Shewanella loihica (strain ATCC BAA-1088 / PV-4)).